A 193-amino-acid polypeptide reads, in one-letter code: Ion-translocating oxidoreductase complex subunit A (193 aa).

6 consecutive transmembrane segments (helical) span residues 5–25, 39–59, 62–82, 102–122, 134–154, and 171–191; these read LLLF…FLGL, IGMG…AWMV, FILL…LVIA, LLGI…VALL, AVYG…FAAI, and SIAL…TGLV.

This sequence belongs to the NqrDE/RnfAE family. The complex is composed of six subunits: RnfA, RnfB, RnfC, RnfD, RnfE and RnfG.

It localises to the cell inner membrane. Its function is as follows. Part of a membrane-bound complex that couples electron transfer with translocation of ions across the membrane. In Yersinia enterocolitica serotype O:8 / biotype 1B (strain NCTC 13174 / 8081), this protein is Ion-translocating oxidoreductase complex subunit A.